Reading from the N-terminus, the 457-residue chain is Glutamate--tRNA ligase 1 (457 aa).

The 'HIGH' region motif lies at 9–19; that stretch reads PSPTGYIHIGN. The short motif at 250–254 is the 'KMSKS' region element; it reads GLSKR. Lys253 lines the ATP pocket.

This sequence belongs to the class-I aminoacyl-tRNA synthetase family. Glutamate--tRNA ligase type 1 subfamily. As to quaternary structure, monomer.

It localises to the cytoplasm. It catalyses the reaction tRNA(Glu) + L-glutamate + ATP = L-glutamyl-tRNA(Glu) + AMP + diphosphate. Its function is as follows. Catalyzes the attachment of glutamate to tRNA(Glu) in a two-step reaction: glutamate is first activated by ATP to form Glu-AMP and then transferred to the acceptor end of tRNA(Glu). The protein is Glutamate--tRNA ligase 1 of Brucella canis (strain ATCC 23365 / NCTC 10854 / RM-666).